Reading from the N-terminus, the 202-residue chain is B-cell CLL/lymphoma 7 protein family member B (202 aa).

The tract at residues 53-202 is disordered; that stretch reads DSKEKEKSKS…PTVPQTASES (150 aa). Over residues 90–99 the composition is skewed to polar residues; it reads ENSNQSSVSD. The span at 107-123 shows a compositional bias: low complexity; it reads SSTNSSPSPQQSESLSP. Phosphoserine is present on residues Ser114, Ser118, Ser120, Ser122, Ser127, Ser148, and Ser152.

It belongs to the BCL7 family. Ubiquitous.

In terms of biological role, positive regulator of apoptosis. Plays a role in the Wnt signaling pathway, negatively regulating the expression of Wnt signaling components CTNNB1 and HMGA1. Involved in cell cycle progression, maintenance of the nuclear structure and stem cell differentiation. May play a role in lung tumor development or progression. The polypeptide is B-cell CLL/lymphoma 7 protein family member B (BCL7B) (Homo sapiens (Human)).